Consider the following 219-residue polypeptide: Transmembrane protein 17B (219 aa).

A glycan (N-linked (GlcNAc...) asparagine) is linked at N26. The next 4 helical transmembrane spans lie at M51–M71, I84–G104, L116–T136, and L147–V167. N-linked (GlcNAc...) asparagine glycans are attached at residues N195 and N203.

It belongs to the TMEM17 family. Part of the tectonic-like complex (also named B9 complex).

Its subcellular location is the cell projection. It localises to the cilium membrane. Functionally, transmembrane component of the tectonic-like complex, a complex localized at the transition zone of primary cilia and acting as a barrier that prevents diffusion of transmembrane proteins between the cilia and plasma membranes. Required for ciliogenesis and sonic hedgehog/SHH signaling. This Xenopus tropicalis (Western clawed frog) protein is Transmembrane protein 17B (Tmem17-b).